Consider the following 485-residue polypeptide: Protein disulfide isomerase-like 5-4 (485 aa).

One can recognise a Thioredoxin domain in the interval 114–263 (VPTGSEFHPG…LVAAMETYVA (150 aa)). Cys-170 functions as the Nucleophile in the catalytic mechanism. Residues 444–464 (FSHFITNVCAIIGGVFTVAGI) form a helical membrane-spanning segment.

The protein belongs to the protein disulfide isomerase family.

It localises to the membrane. Its function is as follows. Acts as a protein-folding catalyst that interacts with nascent polypeptides to catalyze the formation, isomerization, and reduction or oxidation of disulfide bonds. May play a role in storage protein biogenesis. The polypeptide is Protein disulfide isomerase-like 5-4 (PDIL5-4) (Oryza sativa subsp. japonica (Rice)).